The sequence spans 259 residues: uncharacterized protein (259 aa).

The first 22 residues, 1–22 (MKHSKKLLLCISFLLITFFISG), serve as a signal peptide directing secretion. Cys23 carries the N-palmitoyl cysteine lipid modification. Cys23 carries S-diacylglycerol cysteine lipidation.

This sequence belongs to the staphylococcal tandem lipoprotein family.

It is found in the cell membrane. This is an uncharacterized protein from Staphylococcus epidermidis (strain ATCC 35984 / DSM 28319 / BCRC 17069 / CCUG 31568 / BM 3577 / RP62A).